Reading from the N-terminus, the 140-residue chain is Nucleoside diphosphate kinase (140 aa).

Positions 11, 59, 87, 93, 104, and 114 each coordinate ATP. Histidine 117 acts as the Pros-phosphohistidine intermediate in catalysis.

Belongs to the NDK family. Homotetramer. The cofactor is Mg(2+).

Its subcellular location is the cytoplasm. It catalyses the reaction a 2'-deoxyribonucleoside 5'-diphosphate + ATP = a 2'-deoxyribonucleoside 5'-triphosphate + ADP. The enzyme catalyses a ribonucleoside 5'-diphosphate + ATP = a ribonucleoside 5'-triphosphate + ADP. In terms of biological role, major role in the synthesis of nucleoside triphosphates other than ATP. The ATP gamma phosphate is transferred to the NDP beta phosphate via a ping-pong mechanism, using a phosphorylated active-site intermediate. The sequence is that of Nucleoside diphosphate kinase from Bradyrhizobium sp. (strain BTAi1 / ATCC BAA-1182).